Here is a 283-residue protein sequence, read N- to C-terminus: Elongation factor Ts (283 aa).

An involved in Mg(2+) ion dislocation from EF-Tu region spans residues 79 to 82; sequence TDFV.

This sequence belongs to the EF-Ts family.

It is found in the cytoplasm. Associates with the EF-Tu.GDP complex and induces the exchange of GDP to GTP. It remains bound to the aminoacyl-tRNA.EF-Tu.GTP complex up to the GTP hydrolysis stage on the ribosome. In Shewanella amazonensis (strain ATCC BAA-1098 / SB2B), this protein is Elongation factor Ts.